Reading from the N-terminus, the 426-residue chain is Glutamate-1-semialdehyde 2,1-aminomutase (426 aa).

K266 is subject to N6-(pyridoxal phosphate)lysine.

Belongs to the class-III pyridoxal-phosphate-dependent aminotransferase family. HemL subfamily. The cofactor is pyridoxal 5'-phosphate.

Its subcellular location is the cytoplasm. It catalyses the reaction (S)-4-amino-5-oxopentanoate = 5-aminolevulinate. It participates in porphyrin-containing compound metabolism; protoporphyrin-IX biosynthesis; 5-aminolevulinate from L-glutamyl-tRNA(Glu): step 2/2. The protein is Glutamate-1-semialdehyde 2,1-aminomutase (hemL) of Methanocaldococcus jannaschii (strain ATCC 43067 / DSM 2661 / JAL-1 / JCM 10045 / NBRC 100440) (Methanococcus jannaschii).